Consider the following 497-residue polypeptide: MEKFVLSLDEGTTSARAIIFDRESNIHGIGQYEFPQHYPRPGWVEHNPEEIWDAQLRAIKDAIQSARIEPNQIAAIGVTNQRETTLVWDKDGKPLYNAIVWQCRRTAEMVEEIKREYGTMIKEKTGLVPDAYFSASKLKWLLDNVPGLREKAEKGEVMFGTVDTFLIYRLTGEHVTDYSNASRTMLFNIKKLDWDDELLELFDIPESVLPEVRESSEVYGYTKKELLGAEIPVSGDAGDQQAALFGQAAFEAGMVKATYGTGSFILVNTDKMVLYSDNLLTTIAWGLNGRVSYALEGSIFVTGAAVQWLRDGIKIIKHASETEELATKLESNEGVYFVPAFVGLGAPYWDQFARGIIIGITRGTGREHLARATLEAIAYLTRDVVDEMEKLVQIKELRVDGGATANDFLMQFQADILNRKVIRPVVKETTALGAAYLAGLAVDYWADTREIAELWKAERIFEPKMDEKTRERLYKGWKEAVKRAMGWAKVVDSAKSN.

Thr12 is a binding site for ADP. Positions 12, 13, and 14 each coordinate ATP. Sn-glycerol 3-phosphate is bound at residue Thr12. Residue Arg16 participates in ADP binding. Positions 82, 83, 132, and 239 each coordinate sn-glycerol 3-phosphate. Glycerol contacts are provided by Arg82, Glu83, Tyr132, Asp239, and Gln240. ADP is bound by residues Thr261 and Gly303. ATP contacts are provided by Thr261, Gly303, Gln307, and Gly402. ADP is bound by residues Gly402 and Asn406.

This sequence belongs to the FGGY kinase family. As to quaternary structure, homodimer.

It catalyses the reaction glycerol + ATP = sn-glycerol 3-phosphate + ADP + H(+). It participates in polyol metabolism; glycerol degradation via glycerol kinase pathway; sn-glycerol 3-phosphate from glycerol: step 1/1. Functionally, key enzyme in the regulation of glycerol uptake and metabolism. Catalyzes the phosphorylation of glycerol to yield sn-glycerol 3-phosphate. Can utilize other nucleoside triphosphates (GTP, CTP, UTP and ITP) as a phosphoryl donor. The chain is Glycerol kinase from Thermococcus kodakarensis (strain ATCC BAA-918 / JCM 12380 / KOD1) (Pyrococcus kodakaraensis (strain KOD1)).